The primary structure comprises 486 residues: UDP-N-acetylmuramate--L-alanine ligase (486 aa).

123–129 (GTHGKTT) lines the ATP pocket.

This sequence belongs to the MurCDEF family.

It is found in the cytoplasm. The enzyme catalyses UDP-N-acetyl-alpha-D-muramate + L-alanine + ATP = UDP-N-acetyl-alpha-D-muramoyl-L-alanine + ADP + phosphate + H(+). It participates in cell wall biogenesis; peptidoglycan biosynthesis. Cell wall formation. This chain is UDP-N-acetylmuramate--L-alanine ligase, found in Pseudomonas fluorescens (strain Pf0-1).